The sequence spans 521 residues: Cytokinin dehydrogenase 9 (521 aa).

Residues 1–22 form the signal peptide; that stretch reads MRPSLLQYLKLLLLLALGGVTT. A glycan (N-linked (GlcNAc...) asparagine) is linked at N57. Positions 59–237 constitute an FAD-binding PCMH-type domain; the sequence is SSFPPVAVLH…TRARIPLEPA (179 aa). FAD contacts are provided by A95, G97, and G99. Position 100 is a pros-8alpha-FAD histidine (H100). S101, Q105, D161, T166, S172, V176, and I227 together coordinate FAD. N278, N412, and N418 each carry an N-linked (GlcNAc...) asparagine glycan. Y469 is a binding site for FAD. An N-linked (GlcNAc...) asparagine glycan is attached at N472. Q507 lines the FAD pocket.

This sequence belongs to the oxygen-dependent FAD-linked oxidoreductase family. In terms of assembly, monomer. It depends on FAD as a cofactor. In terms of tissue distribution, expressed in inflorescence meristems.

The protein resides in the secreted. The protein localises to the extracellular space. It localises to the cytoplasm. Its subcellular location is the cytosol. It is found in the nucleus. The catalysed reaction is N(6)-dimethylallyladenine + A + H2O = 3-methyl-2-butenal + adenine + AH2. Catalyzes the oxidation of cytokinins, a family of N(6)-substituted adenine derivatives that are plant hormones, where the substituent is an isopentenyl group. Possesses cytokinin oxidase activity toward trans-zeatin (tZ) and N6-(2-isopentenyl)adenine (2iP) in vitro. Functions as a primary strigolactone-responsive gene to regulate rice tillering, plant height, and panicle size, likely via a secondary response gene, RR5, which encodes a cytokinin-inducible rice type-A response regulator that seems to act as negative regulator of the cytokinin signaling. This chain is Cytokinin dehydrogenase 9, found in Oryza sativa subsp. japonica (Rice).